A 404-amino-acid polypeptide reads, in one-letter code: Zinc metalloprotease Rip1 (404 aa).

Residues 1 to 21 (MMFVTGIVLFALAILISVALH) traverse the membrane as a helical segment. His-21 serves as a coordination point for Zn(2+). The active site involves Glu-22. His-25 serves as a coordination point for Zn(2+). The helical transmembrane segment at 104-124 (PGMNLAICLVLIYAIALVWGL) threads the bilayer. The 83-residue stretch at 121-203 (VWGLPNLHPP…SVPIVVERDG (83 aa)) folds into the PDZ domain. Residue Asp-202 participates in Zn(2+) binding. 2 consecutive transmembrane segments (helical) span residues 313–333 (LWVA…AINL) and 373–393 (LLPA…LTVT).

It belongs to the peptidase M50B family. It depends on Zn(2+) as a cofactor.

The protein localises to the cell membrane. In terms of biological role, a probable site-2 protease (S2P) that cleaves type-2 transmembrane proteins within their membrane-spanning domains. Degrades anti-sigma factors RskA, RslA and RsmA, releasing sigma factors SigK, SigL and SigM from the cellular membrane, activating signaling pathways. Does not act on RsdA. Regulates the composition of extractable mycolic acids in the cell envelope in response to changes in membrane fluidity. Mediates transcriptional regulation of mycolic acid biosynthetic genes in response to detergent. Probably also cleaves PbpB (PBP3, FtsI); this cleavage is inhibited by Wag31-PbpBI interaction. Its function is as follows. Regulated intramembrane proteolysis (RIP) occurs when an extracytoplasmic signal (possibly oxidative stress) triggers a concerted proteolytic cascade to transmit information and elicit cellular responses. The membrane-spanning regulatory substrate protein (includes anti-sigma factors RskA, RslA, RsmA, and PbpB) is first cut extracytoplasmically (site-1 protease, S1P), then within the membrane itself (site-2 protease, S2P, this entry), while cytoplasmic proteases finish degrading the regulatory protein, liberating the effector protein (ECF sigma factors SigK, SigL and SigM). In Mycobacterium tuberculosis (strain ATCC 35801 / TMC 107 / Erdman), this protein is Zinc metalloprotease Rip1 (rip1).